The following is a 658-amino-acid chain: Glycogen debranching enzyme (658 aa).

Aspartate 336 functions as the Nucleophile in the catalytic mechanism. The active-site Proton donor is the glutamate 371. Positions 459–483 (EANGEENRDGTNSNYSDNHGKEGLG) are disordered.

Belongs to the glycosyl hydrolase 13 family.

The catalysed reaction is Hydrolysis of (1-&gt;6)-alpha-D-glucosidic linkages to branches with degrees of polymerization of three or four glucose residues in limit dextrin.. It functions in the pathway glycan degradation; glycogen degradation. Removes maltotriose and maltotetraose chains that are attached by 1,6-alpha-linkage to the limit dextrin main chain, generating a debranched limit dextrin. This chain is Glycogen debranching enzyme, found in Salmonella agona (strain SL483).